Consider the following 636-residue polypeptide: Sodium-dependent nutrient amino acid transporter 1 (636 aa).

The tract at residues 1-40 is disordered; it reads MELKTMPQNGANNGNPQGNTSNNNNTNDSSNSNSNNNNKT. Residues 1-50 are Cytoplasmic-facing; it reads MELKTMPQNGANNGNPQGNTSNNNNTNDSSNSNSNNNNKTERTNWSNGLE. A compositionally biased stretch (low complexity) spans 7 to 40; that stretch reads PQNGANNGNPQGNTSNNNNTNDSSNSNSNNNNKT. Transmembrane regions (helical) follow at residues 51-71, 78-98, and 131-151; these read FLMS…FPFT, GAFL…MYYL, and TICI…YLAV. Asparagine 184 carries N-linked (GlcNAc...) asparagine glycosylation. 9 helical membrane passes run 225 to 245, 254 to 274, 303 to 323, 337 to 357, 397 to 417, 436 to 456, 469 to 489, 511 to 531, and 547 to 567; these read PDWK…LVIM, AAYF…GRAV, AVVQ…MFSS, IVTT…FAIL, LFSA…IVAL, VALV…TPGG, TYVV…IYGV, CWLI…MVTI, and VAGW…GWWY.

Belongs to the sodium:neurotransmitter symporter (SNF) (TC 2.A.22) family.

The protein resides in the membrane. Functionally, unusual broad substrate spectrum amino acid:sodium cotransporter that promotes absorption of the D isomers of essential amino acids. Neutral amino acids are the preferred substrates, especially methionine and phenylalanine. The sequence is that of Sodium-dependent nutrient amino acid transporter 1 from Drosophila grimshawi (Hawaiian fruit fly).